The following is a 481-amino-acid chain: Glutamate--tRNA ligase (481 aa).

The short motif at Pro9 to Thr19 is the 'HIGH' region element. A 'KMSKS' region motif is present at residues Lys247–Arg251. Lys250 serves as a coordination point for ATP.

It belongs to the class-I aminoacyl-tRNA synthetase family. Glutamate--tRNA ligase type 1 subfamily. As to quaternary structure, monomer.

It localises to the cytoplasm. The catalysed reaction is tRNA(Glu) + L-glutamate + ATP = L-glutamyl-tRNA(Glu) + AMP + diphosphate. Catalyzes the attachment of glutamate to tRNA(Glu) in a two-step reaction: glutamate is first activated by ATP to form Glu-AMP and then transferred to the acceptor end of tRNA(Glu). The protein is Glutamate--tRNA ligase of Nostoc punctiforme (strain ATCC 29133 / PCC 73102).